Consider the following 105-residue polypeptide: MINNNKAMLEQYNVSKLASEEKLKALAQNKNDKLLKEQTDSFEALLLKFMLDSAMKMDNPLYPKAPGDEIYASMYKDTLSKELSGNFGYSEMLFNFLKEQEKQKP.

This sequence to C.jejuni CJ1463.

This is an uncharacterized protein from Helicobacter pylori (strain ATCC 700392 / 26695) (Campylobacter pylori).